Here is a 92-residue protein sequence, read N- to C-terminus: Alpha-conotoxin-like Rt20.1 (92 aa).

Residues 1–24 form the signal peptide; sequence MPKLEMMLLVLLILPLSYFSAAGG. The propeptide occupies 25-45; the sequence is QVVQGDLRSDVLARYLQRGDR. The residue at position 49 (Glu49) is a 4-carboxyglutamate. Pro55 bears the 4-hydroxyproline mark. 4 disulfides stabilise this stretch: Cys63-Cys72, Cys68-Cys80, Cys73-Cys90, and Cys78-Cys92.

The protein belongs to the conotoxin D superfamily. As to quaternary structure, hetero-, homo- or pseudo-homodimer (identical sequence, different post-translational modifications). In terms of tissue distribution, expressed by the venom duct.

Its subcellular location is the secreted. Functionally, alpha-conotoxins act on postsynaptic membranes, they bind to the nicotinic acetylcholine receptors (nAChR) and thus inhibit them. Through its two C-terminal domains, this homodimeric protein would bind to two nAChR allosteric sites, located outside the nAChR C-loop of the principal binding face and at the adjacent binding interface in a clockwise direction. This toxin specifically blocks mammalian neuronal nAChR of the alpha-7/CHRNA7, alpha-3-beta-2/CHRNA3-CHRNB2 and alpha-4-beta-2/CHRNA4-CHRNB2 subtypes. This is Alpha-conotoxin-like Rt20.1 from Conus rattus (Rat cone).